Here is a 177-residue protein sequence, read N- to C-terminus: ATP synthase subunit delta (177 aa).

It belongs to the ATPase delta chain family. In terms of assembly, F-type ATPases have 2 components, F(1) - the catalytic core - and F(0) - the membrane proton channel. F(1) has five subunits: alpha(3), beta(3), gamma(1), delta(1), epsilon(1). F(0) has three main subunits: a(1), b(2) and c(10-14). The alpha and beta chains form an alternating ring which encloses part of the gamma chain. F(1) is attached to F(0) by a central stalk formed by the gamma and epsilon chains, while a peripheral stalk is formed by the delta and b chains.

The protein localises to the cell inner membrane. Functionally, f(1)F(0) ATP synthase produces ATP from ADP in the presence of a proton or sodium gradient. F-type ATPases consist of two structural domains, F(1) containing the extramembraneous catalytic core and F(0) containing the membrane proton channel, linked together by a central stalk and a peripheral stalk. During catalysis, ATP synthesis in the catalytic domain of F(1) is coupled via a rotary mechanism of the central stalk subunits to proton translocation. Its function is as follows. This protein is part of the stalk that links CF(0) to CF(1). It either transmits conformational changes from CF(0) to CF(1) or is implicated in proton conduction. The sequence is that of ATP synthase subunit delta from Shewanella sp. (strain ANA-3).